A 290-amino-acid chain; its full sequence is Ribosomal protein L11 methyltransferase (290 aa).

S-adenosyl-L-methionine is bound by residues threonine 135, glycine 158, aspartate 180, and asparagine 227.

It belongs to the methyltransferase superfamily. PrmA family.

It localises to the cytoplasm. The catalysed reaction is L-lysyl-[protein] + 3 S-adenosyl-L-methionine = N(6),N(6),N(6)-trimethyl-L-lysyl-[protein] + 3 S-adenosyl-L-homocysteine + 3 H(+). In terms of biological role, methylates ribosomal protein L11. The protein is Ribosomal protein L11 methyltransferase of Mesorhizobium japonicum (strain LMG 29417 / CECT 9101 / MAFF 303099) (Mesorhizobium loti (strain MAFF 303099)).